The following is a 426-amino-acid chain: Serine--tRNA ligase (426 aa).

231–233 contributes to the L-serine binding site; sequence TLE. 262-264 is a binding site for ATP; that stretch reads RSE. Glu-285 contacts L-serine. 349 to 352 serves as a coordination point for ATP; it reads EISS. Ser-385 contacts L-serine.

Belongs to the class-II aminoacyl-tRNA synthetase family. Type-1 seryl-tRNA synthetase subfamily. As to quaternary structure, homodimer. The tRNA molecule binds across the dimer.

The protein resides in the cytoplasm. It carries out the reaction tRNA(Ser) + L-serine + ATP = L-seryl-tRNA(Ser) + AMP + diphosphate + H(+). It catalyses the reaction tRNA(Sec) + L-serine + ATP = L-seryl-tRNA(Sec) + AMP + diphosphate + H(+). The protein operates within aminoacyl-tRNA biosynthesis; selenocysteinyl-tRNA(Sec) biosynthesis; L-seryl-tRNA(Sec) from L-serine and tRNA(Sec): step 1/1. Functionally, catalyzes the attachment of serine to tRNA(Ser). Is also able to aminoacylate tRNA(Sec) with serine, to form the misacylated tRNA L-seryl-tRNA(Sec), which will be further converted into selenocysteinyl-tRNA(Sec). This is Serine--tRNA ligase from Malacoplasma penetrans (strain HF-2) (Mycoplasma penetrans).